The following is a 377-amino-acid chain: N5-carboxyaminoimidazole ribonucleotide synthase (377 aa).

ATP contacts are provided by residues Arg-93, Lys-133, 138–144 (GYDGRGQ), 175–178 (EEFV), Glu-183, His-206, and 257–258 (NE). Residues 97–287 (KTLLDHAGVR…QFENHLRAVC (191 aa)) form the ATP-grasp domain.

The protein belongs to the PurK/PurT family. Homodimer.

The catalysed reaction is 5-amino-1-(5-phospho-beta-D-ribosyl)imidazole + hydrogencarbonate + ATP = 5-carboxyamino-1-(5-phospho-D-ribosyl)imidazole + ADP + phosphate + 2 H(+). The protein operates within purine metabolism; IMP biosynthesis via de novo pathway; 5-amino-1-(5-phospho-D-ribosyl)imidazole-4-carboxylate from 5-amino-1-(5-phospho-D-ribosyl)imidazole (N5-CAIR route): step 1/2. Catalyzes the ATP-dependent conversion of 5-aminoimidazole ribonucleotide (AIR) and HCO(3)(-) to N5-carboxyaminoimidazole ribonucleotide (N5-CAIR). The polypeptide is N5-carboxyaminoimidazole ribonucleotide synthase (Vibrio vulnificus (strain YJ016)).